Reading from the N-terminus, the 313-residue chain is 3'-5' exoribonuclease YhaM (313 aa).

Residues 22–90 (SSVKGTASNG…QLKIRQIRQA (69 aa)) constitute a DNA-binding region (OB). An HD domain is found at 163–279 (HVVSMLRLAK…LHQIDLMDAS (117 aa)).

This sequence belongs to the YhaM family.

Its function is as follows. Shows a 3'-5' exoribonuclease activity. The polypeptide is 3'-5' exoribonuclease YhaM (Listeria monocytogenes serovar 1/2a (strain ATCC BAA-679 / EGD-e)).